A 454-amino-acid chain; its full sequence is Type II methyltransferase M.MvaI (454 aa).

The protein belongs to the N(4)/N(6)-methyltransferase family. N(4) subfamily.

It catalyses the reaction a 2'-deoxycytidine in DNA + S-adenosyl-L-methionine = an N(4)-methyl-2'-deoxycytidine in DNA + S-adenosyl-L-homocysteine + H(+). Its function is as follows. An alpha subtype methylase, recognizes the double-stranded sequence 5'-CCWGG-3', methylatES C-2 on both strands, and protects the DNA from cleavage by the MvaI endonuclease. In Kocuria varians (Micrococcus varians), this protein is Type II methyltransferase M.MvaI.